The following is a 151-amino-acid chain: DNA-directed RNA polymerase RPB6 homolog (151 aa).

Residues 20–44 (ETEEENFVDSEEESEDKSEDKDEIV) show a composition bias toward acidic residues. Residues 20-46 (ETEEENFVDSEEESEDKSEDKDEIVES) are disordered.

The protein belongs to the archaeal RpoK/eukaryotic RPB6 RNA polymerase subunit family. In terms of assembly, part of the viral DNA-directed RNA polymerase that consists of 8 polII-like subunits (RPB1, RPB2, RPB3, RPB5, RPB6, RPB7, RPB9, RPB10), a capping enzyme and a termination factor.

The protein localises to the host cytoplasm. Its subcellular location is the virion. In terms of biological role, component of the DNA-directed RNA polymerase (RNAP) that catalyzes the transcription in the cytoplasm of viral DNA into RNA using the four ribonucleoside triphosphates as substrates. The sequence is that of DNA-directed RNA polymerase RPB6 homolog from African swine fever virus (isolate Tick/Malawi/Lil 20-1/1983) (ASFV).